A 333-amino-acid polypeptide reads, in one-letter code: Fructose-1,6-bisphosphatase class 1 1 (333 aa).

Mg(2+) contacts are provided by E81, D100, L102, and D103. Residues D103 to S106 and N191 contribute to the substrate site. Position 263 (E263) interacts with Mg(2+).

It belongs to the FBPase class 1 family. As to quaternary structure, homotetramer. The cofactor is Mg(2+).

The protein localises to the cytoplasm. The catalysed reaction is beta-D-fructose 1,6-bisphosphate + H2O = beta-D-fructose 6-phosphate + phosphate. It functions in the pathway carbohydrate biosynthesis; Calvin cycle. The protein is Fructose-1,6-bisphosphatase class 1 1 of Cereibacter sphaeroides (strain ATCC 17029 / ATH 2.4.9) (Rhodobacter sphaeroides).